We begin with the raw amino-acid sequence, 315 residues long: tRNA dimethylallyltransferase (315 aa).

10–17 (GPTEVGKT) lines the ATP pocket. 12–17 (TEVGKT) lines the substrate pocket. The interaction with substrate tRNA stretch occupies residues 35–38 (DSMQ).

This sequence belongs to the IPP transferase family. As to quaternary structure, monomer. Mg(2+) serves as cofactor.

The enzyme catalyses adenosine(37) in tRNA + dimethylallyl diphosphate = N(6)-dimethylallyladenosine(37) in tRNA + diphosphate. Catalyzes the transfer of a dimethylallyl group onto the adenine at position 37 in tRNAs that read codons beginning with uridine, leading to the formation of N6-(dimethylallyl)adenosine (i(6)A). The chain is tRNA dimethylallyltransferase from Geobacillus thermodenitrificans (strain NG80-2).